Consider the following 555-residue polypeptide: CTP synthase (555 aa).

The segment at 1–267 (MPKFVFVTGG…CKEVLEFLDL (267 aa)) is amidoligase domain. Serine 13 is a CTP binding site. Serine 13 is a binding site for UTP. ATP-binding positions include 14 to 19 (SIGKGI) and aspartate 71. Residues aspartate 71 and glutamate 141 each contribute to the Mg(2+) site. CTP is bound by residues 148–150 (DIE), 188–193 (KTKPTQ), and lysine 224. Residues 188–193 (KTKPTQ) and lysine 224 contribute to the UTP site. One can recognise a Glutamine amidotransferase type-1 domain in the interval 292–534 (KVAVVGKYVQ…IAAAQSRLPR (243 aa)). Glycine 354 is a binding site for L-glutamine. Cysteine 381 acts as the Nucleophile; for glutamine hydrolysis in catalysis. Residues 382 to 385 (LGMQ), glutamate 405, and arginine 462 each bind L-glutamine. Catalysis depends on residues histidine 507 and glutamate 509. The interval 532 to 555 (LPRSPQEALKQTQINSPNQSKNNP) is disordered. The span at 540–555 (LKQTQINSPNQSKNNP) shows a compositional bias: polar residues.

The protein belongs to the CTP synthase family. As to quaternary structure, homotetramer.

It catalyses the reaction UTP + L-glutamine + ATP + H2O = CTP + L-glutamate + ADP + phosphate + 2 H(+). It carries out the reaction L-glutamine + H2O = L-glutamate + NH4(+). The catalysed reaction is UTP + NH4(+) + ATP = CTP + ADP + phosphate + 2 H(+). It functions in the pathway pyrimidine metabolism; CTP biosynthesis via de novo pathway; CTP from UDP: step 2/2. With respect to regulation, allosterically activated by GTP, when glutamine is the substrate; GTP has no effect on the reaction when ammonia is the substrate. The allosteric effector GTP functions by stabilizing the protein conformation that binds the tetrahedral intermediate(s) formed during glutamine hydrolysis. Inhibited by the product CTP, via allosteric rather than competitive inhibition. Catalyzes the ATP-dependent amination of UTP to CTP with either L-glutamine or ammonia as the source of nitrogen. Regulates intracellular CTP levels through interactions with the four ribonucleotide triphosphates. The protein is CTP synthase of Prochlorococcus marinus (strain MIT 9211).